The primary structure comprises 629 residues: Arginine--tRNA ligase (629 aa).

The short motif at 128 to 138 (VNPTKPLHMGH) is the 'HIGH' region element.

This sequence belongs to the class-I aminoacyl-tRNA synthetase family.

The protein resides in the cytoplasm. The catalysed reaction is tRNA(Arg) + L-arginine + ATP = L-arginyl-tRNA(Arg) + AMP + diphosphate. This is Arginine--tRNA ligase (argS) from Pyrococcus horikoshii (strain ATCC 700860 / DSM 12428 / JCM 9974 / NBRC 100139 / OT-3).